Here is a 236-residue protein sequence, read N- to C-terminus: DCN1-like protein 5 (236 aa).

Phosphoserine is present on residues S9, S40, and S47. Residues 45–231 (FSSKKCLAWF…LLDEFVEWHK (187 aa)) form the DCUN1 domain.

Part of a complex that contains DCUN1D5, CUL1 and RBX1; this interaction is bridged by CUL1. Interacts (via the DCUN1 domain) with the unneddylated cullins: interacts with CUL1, CUL2, CUL3, CUL4A, CUL4B and CUL5; these interactions promote the cullin neddylation and the identity of the cullin dictates the affinity of the interaction. Interacts (via DCUN1 domain) with UBE2M (N-terminally acetylated form) and probably with UBE2F (N-terminally acetylated form). May also interact with regulators or subunits of cullin-RING ligases such as RBX1, RNF7, ELOB and DDB1; these interactions are bridged by cullins. Interacts with CAND1; this interaction is bridged by cullins and strongly inhibits the neddylation of cullins. These CAND-cullin-DCNL complexes can only be neddylated in the presence of a substrate adapter. Phosphorylation at Ser-40 is independent of cullin's interaction. Phosphorylated in response to both TICAM1 and MYD88 dependent Toll-like receptor (TLR) pathway activation. Phosphorylated in response to IL1B stimulation.

Its subcellular location is the nucleus. The protein resides in the cytoplasm. It localises to the cytoskeleton. It is found in the spindle. In terms of biological role, contributes to the neddylation of all cullins by transferring NEDD8 from N-terminally acetylated NEDD8-conjugating E2s enzyme to different cullin C-terminal domain-RBX complexes which is necessary for the activation of cullin-RING E3 ubiquitin ligases (CRLs). May play a role in DNA damage response and may participate in cell proliferation and anchorage-independent cell growth. This is DCN1-like protein 5 (DCUN1D5) from Bos taurus (Bovine).